Here is a 238-residue protein sequence, read N- to C-terminus: Response regulator receiver protein Anae109_2439 (238 aa).

Response regulatory domains are found at residues 3-117 and 121-228; these read RYLI…AAAR and LVAV…ERLH. Asp-52 and Asp-169 each carry 4-aspartylphosphate.

Is diphosphorylated by GchK.

Its function is as follows. Member of the two-component regulatory system GcHK/Anae109_2439. Is involved in a signal transduction system responding to oxygen availability. The chain is Response regulator receiver protein Anae109_2439 from Anaeromyxobacter sp. (strain Fw109-5).